The primary structure comprises 426 residues: Lactate racemase (426 aa).

72–75 (DHTR) contributes to the Ni(II)-pyridinium-3,5-bisthiocarboxylate mononucleotide binding site. Catalysis depends on proton donor/acceptor residues histidine 108 and histidine 174. Ni(II)-pyridinium-3,5-bisthiocarboxylate mononucleotide contacts are provided by lysine 184 and histidine 200. Substrate contacts are provided by glutamine 295 and lysine 298.

Belongs to the lactate racemase family. In terms of assembly, homodimer. It depends on Ni(II)-pyridinium-3,5-bisthiocarboxylate mononucleotide as a cofactor.

The enzyme catalyses (S)-lactate = (R)-lactate. Activation of the apo-enzyme requires the three accessory proteins LarB, LarE and LarC, that are involved in the biosynthesis of the nickel-pincer cofactor of LarA. Catalyzes the interconversion between the D- and L-isomers of lactate. The polypeptide is Lactate racemase (Thermoanaerobacterium thermosaccharolyticum (strain ATCC 7956 / DSM 571 / NCIMB 9385 / NCA 3814 / NCTC 13789 / WDCM 00135 / 2032) (Clostridium thermosaccharolyticum)).